The primary structure comprises 155 residues: Small ribosomal subunit protein uS7 (155 aa).

Belongs to the universal ribosomal protein uS7 family. As to quaternary structure, part of the 30S ribosomal subunit. Contacts proteins S9 and S11.

In terms of biological role, one of the primary rRNA binding proteins, it binds directly to 16S rRNA where it nucleates assembly of the head domain of the 30S subunit. Is located at the subunit interface close to the decoding center, probably blocks exit of the E-site tRNA. This Halorhodospira halophila (strain DSM 244 / SL1) (Ectothiorhodospira halophila (strain DSM 244 / SL1)) protein is Small ribosomal subunit protein uS7.